The following is a 261-amino-acid chain: 5'-nucleotidase SurE (261 aa).

A divalent metal cation-binding residues include aspartate 8, aspartate 9, serine 43, and asparagine 96.

Belongs to the SurE nucleotidase family. The cofactor is a divalent metal cation.

It is found in the cytoplasm. It catalyses the reaction a ribonucleoside 5'-phosphate + H2O = a ribonucleoside + phosphate. Nucleotidase that shows phosphatase activity on nucleoside 5'-monophosphates. This Cereibacter sphaeroides (strain ATCC 17023 / DSM 158 / JCM 6121 / CCUG 31486 / LMG 2827 / NBRC 12203 / NCIMB 8253 / ATH 2.4.1.) (Rhodobacter sphaeroides) protein is 5'-nucleotidase SurE.